The chain runs to 472 residues: Inhibitor of Apoptosis OPG037 (472 aa).

ANK repeat units lie at residues 97–126, 130–161, 233–263, 267–297, 322–351, and 353–377; these read DGNYPLHIASKINNNRIVAMLLTHGADPNA, HNKTPLYYLSGTDDEVIERINLLVQYGAKINN, DGNTPLHIVCSKTVKNVDIIDLLLPSTDVNK, FGDSPLTLLIKTLSPAHLINKLLSTSNVITD, YDSTDFKMAVEVGSIRCVKYLLDNDIICED, and MYYAVLSEYETMVDYLLFNHFSVDF.

Belongs to the orthopoxvirus OPG037 protein family. As to quaternary structure, may interact with host caspase-9-Apaf-1 complex.

The protein localises to the host cytoplasm. Its function is as follows. Inhibits host apoptosis. Acts by associating with host apoptosome. The chain is Inhibitor of Apoptosis OPG037 (OPG037) from Vaccinia virus (strain Western Reserve) (VACV).